We begin with the raw amino-acid sequence, 295 residues long: Movement protein (295 aa).

Residues 256-295 (KKTNVKEESPTSDPQSGEVSSMTQSVPGAADTRIPKPRRR) are disordered. Positions 266–281 (TSDPQSGEVSSMTQSV) are enriched in polar residues.

This sequence belongs to the bromovirus movement protein family.

It localises to the host cell junction. Its subcellular location is the host plasmodesma. In terms of biological role, transports viral genome to neighboring plant cells directly through plasmosdesmata, without any budding. The movement protein allows efficient cell to cell propagation, by bypassing the host cell wall barrier. Acts by forming a tubular structure at the host plasmodesmata, enlarging it enough to allow free passage of virion capsids. In Broad bean mottle virus, this protein is Movement protein.